Here is a 271-residue protein sequence, read N- to C-terminus: Adenosylcobinamide-GDP ribazoletransferase (271 aa).

The next 7 membrane-spanning stretches (helical) occupy residues 4–24 (FLLALRTTFGFLSTIPVGMSM), 35–55 (YLQTFAGIVLGSMIGIFAYLT), 58–78 (FLPSTISAVLIMVFIYYITGL), 108–128 (SLGIGGVSYTVLALIALYASI), 135–155 (VLFFSDNAALIIAISLLIAEI), 192–212 (FVLGALVCVLAFGTLGIIGYI), and 246–266 (IIVLMVLTVAITAVNNGYGGL).

Belongs to the CobS family. It depends on Mg(2+) as a cofactor.

It is found in the cell membrane. It catalyses the reaction alpha-ribazole + adenosylcob(III)inamide-GDP = adenosylcob(III)alamin + GMP + H(+). The catalysed reaction is alpha-ribazole 5'-phosphate + adenosylcob(III)inamide-GDP = adenosylcob(III)alamin 5'-phosphate + GMP + H(+). The protein operates within cofactor biosynthesis; adenosylcobalamin biosynthesis; adenosylcobalamin from cob(II)yrinate a,c-diamide: step 7/7. In terms of biological role, joins adenosylcobinamide-GDP and alpha-ribazole to generate adenosylcobalamin (Ado-cobalamin). Also synthesizes adenosylcobalamin 5'-phosphate from adenosylcobinamide-GDP and alpha-ribazole 5'-phosphate. This is Adenosylcobinamide-GDP ribazoletransferase from Methanococcoides burtonii (strain DSM 6242 / NBRC 107633 / OCM 468 / ACE-M).